Reading from the N-terminus, the 112-residue chain is cAMP-regulated phosphoprotein 19 (112 aa).

A compositionally biased stretch (low complexity) spans 1 to 11; the sequence is MSAESPEPASA. Residues 1-49 are disordered; the sequence is MSAESPEPASAEEQKEMEDKVLSPEKAEEAKLKARYPHLGQKPGGSDFL. Basic and acidic residues predominate over residues 12 to 32; the sequence is EEQKEMEDKVLSPEKAEEAKL. S62 and S104 each carry phosphoserine; by GWL. Positions 72–112 are disordered; it reads MKNKQLPTAAPDKTEVTGDHIPTPQDLPQRKPSLVASKLAG. Position 104 is a phosphoserine; by PKA (S104).

It belongs to the endosulfine family. As to quaternary structure, interacts (when phosphorylated at Ser-62) with PPP2R2D. In terms of processing, phosphorylation at Ser-62 by MASTL/GWL during mitosis is essential for interaction with PPP2R2D (PR55-delta) and subsequent inactivation of PP2A.

Its subcellular location is the cytoplasm. In terms of biological role, protein phosphatase inhibitor that specifically inhibits protein phosphatase 2A (PP2A) during mitosis. Inhibition of PP2A is enhanced when ARPP19 is phosphorylated. When phosphorylated at Ser-62 during mitosis, specifically interacts with PPP2R2D (PR55-delta) and inhibits its activity, leading to inactivation of PP2A, an essential condition to keep cyclin-B1-CDK1 activity high during M phase. The chain is cAMP-regulated phosphoprotein 19 (ARPP19) from Taeniopygia guttata (Zebra finch).